The following is a 1079-amino-acid chain: Zn(2)-C6 fungal-type transcription factor FTF1a (1079 aa).

Positions 177–204 form a DNA-binding region, zn(2)-C6 fungal-type; that stretch reads CIACRRKKIRCSGEKPACKQCLHSCIPC.

The protein localises to the nucleus. Its function is as follows. Zn(2)-C6 fungal-type transcription factor that has a role in the establishment of the fungus within the plant and/or the progress of the disease. Regulates the expression of virulence factors such as SIX1 and SIX6. This Fusarium oxysporum f. sp. lycopersici (strain 4287 / CBS 123668 / FGSC 9935 / NRRL 34936) (Fusarium vascular wilt of tomato) protein is Zn(2)-C6 fungal-type transcription factor FTF1a.